Here is a 179-residue protein sequence, read N- to C-terminus: Probable protein archease (179 aa).

Positions 55, 178, and 179 each coordinate Ca(2+).

It belongs to the archease family.

In terms of biological role, activates the tRNA-splicing ligase complex by facilitating the enzymatic turnover of catalytic subunit RtcB. Acts by promoting the guanylylation of RtcB, a key intermediate step in tRNA ligation. Can also alter the NTP specificity of RtcB such that ATP, dGTP or ITP is used efficiently. The sequence is that of Probable protein archease from Mycobacterium tuberculosis (strain CDC 1551 / Oshkosh).